We begin with the raw amino-acid sequence, 484 residues long: Transcription factor TGAL4 (484 aa).

Residues 1-11 show a composition bias toward polar residues; the sequence is MGEASSSSGHP. 3 disordered regions span residues 1-22, 84-137, and 155-181; these read MGEASSSSGHPRQNPHVLGYGF, ATAA…NASS, and QQEQHKKMATNSPTHSSKTGKALDPKT. The segment covering 123–137 has biased composition (low complexity); that stretch reads SESSSKNNSNQNASS. The segment covering 163 to 173 has biased composition (polar residues); sequence ATNSPTHSSKT. Positions 178–222 constitute a bZIP domain; the sequence is DPKTMRRLAQNREAARKSRLRKKAYIQQLESSKLKLAQMEQDIHR. A basic motif region spans residues 180–200; that stretch reads KTMRRLAQNREAARKSRLRKK. A leucine-zipper region spans residues 206 to 220; that stretch reads LESSKLKLAQMEQDI. The DOG1 domain occupies 241–455; the sequence is AAMFDVDYAR…RALSSLWASR (215 aa).

Belongs to the bZIP family. As to quaternary structure, interacts with NPR1/NH1 and NPR3/NH3.

It localises to the nucleus. Functionally, transcriptional regulator involved in defense response. This chain is Transcription factor TGAL4, found in Oryza sativa subsp. japonica (Rice).